Consider the following 203-residue polypeptide: Guanylate kinase (203 aa).

In terms of domain architecture, Guanylate kinase-like spans 3-181 (GSLFIVAAPS…AHTDLRAIVQ (179 aa)). 10-17 (APSGAGKT) lines the ATP pocket.

It belongs to the guanylate kinase family.

The protein resides in the cytoplasm. It catalyses the reaction GMP + ATP = GDP + ADP. Functionally, essential for recycling GMP and indirectly, cGMP. The protein is Guanylate kinase of Nitrosococcus oceani (strain ATCC 19707 / BCRC 17464 / JCM 30415 / NCIMB 11848 / C-107).